The sequence spans 376 residues: Putative transcription factor egl-18 (376 aa).

Disordered stretches follow at residues 1–33, 65–122, 148–197, and 240–264; these read MSIS…CSGC, NNEL…LPDF, MVQQ…SDIP, and ATPS…PNAA. Over residues 9–27 the composition is skewed to basic and acidic residues; sequence TRPESAEQQHHEVLQRPSD. Composition is skewed to low complexity over residues 68-89 and 165-175; these read LKSS…RSSP and QQSVSPPQSKS. Residues 176 to 195 are compositionally biased toward basic and acidic residues; that stretch reads VKIEDPMDQDVKQEESERSD. The segment covering 241-250 has biased composition (polar residues); that stretch reads TPSSQSQDSS. A GATA-type zinc finger spans residues 266 to 290; that stretch reads CSNCRTDKTTAWRRDAEGKLVCNPC.

In terms of tissue distribution, expressed in differentiated seam cells. Expressed in the head and trunk.

It is found in the nucleus. In terms of biological role, probable transcription factor. Involved in embryonic development and in vulval development in larvae, acting redundantly, at least in part, with elt-6. Perhaps acting together with elt-6, may form a positive feedback loop to initiate and maintain lin-39 gene expression to ensure proper vulval precursor cell (VPC) fate specification. Together with elt-6, acts as a downstream target of the Wnt/beta-catenin asymmetry pathway, required to adopt or maintain the seam cell fate. Required in seam cells, acting redundantly with elt-6, to promote production of alae, expression of several seam-specific genes and maintenance of seam cells in an unfused state. Plays a role in longevity. May form a transcriptional circuit with GATA factors elt-3 and elt-6. This chain is Putative transcription factor egl-18, found in Caenorhabditis elegans.